A 1138-amino-acid polypeptide reads, in one-letter code: Ras guanine nucleotide exchange factor N (1138 aa).

3 LRR repeats span residues 1–16 (MSYN…ITQL), 18–39 (HLKS…SYFG), and 43–64 (TLQK…FYLL). 7 disordered regions span residues 126–180 (ALKN…SNNN), 239–301 (FNSE…GSRK), 319–360 (NKTH…SDTN), 389–411 (IDSP…SPPQ), 473–540 (GSPT…NNNN), 601–643 (ATTV…TSGS), and 660–680 (MSDV…SQSG). The segment covering 140–158 (KTKGLHSSSSNINTSNNIT) has biased composition (low complexity). A compositionally biased stretch (polar residues) spans 263 to 275 (RAQTISGKQPSII). Residues 283–299 (SGGGSGNNNNSGGGGGS) show a composition bias toward gly residues. A compositionally biased stretch (low complexity) spans 326-352 (GHSSSSQSNSTTNTPSISSTPYPTSTI). Residues 393–405 (RTLERRNSSRDDI) are compositionally biased toward basic and acidic residues. Positions 487–496 (PQHPPPPPPI) are enriched in pro residues. Polar residues predominate over residues 498 to 511 (DNNQPKLNQSQNLI). Composition is skewed to low complexity over residues 512 to 540 (NTNS…NNNN) and 605 to 634 (NSNS…NSPQ). The region spanning 733-855 (GVPKVKNITL…LLLNIINMKR (123 aa)) is the N-terminal Ras-GEF domain. Residues 891–1118 (RPHEIARQLT…YSEASKIEEK (228 aa)) enclose the Ras-GEF domain.

Its function is as follows. Promotes the exchange of Ras-bound GDP by GTP. May play a role in chemotaxis. This Dictyostelium discoideum (Social amoeba) protein is Ras guanine nucleotide exchange factor N (gefN).